Reading from the N-terminus, the 94-residue chain is Pyrimidine/purine nucleoside phosphorylase (94 aa).

Belongs to the nucleoside phosphorylase PpnP family.

It carries out the reaction a purine D-ribonucleoside + phosphate = a purine nucleobase + alpha-D-ribose 1-phosphate. The catalysed reaction is adenosine + phosphate = alpha-D-ribose 1-phosphate + adenine. The enzyme catalyses cytidine + phosphate = cytosine + alpha-D-ribose 1-phosphate. It catalyses the reaction guanosine + phosphate = alpha-D-ribose 1-phosphate + guanine. It carries out the reaction inosine + phosphate = alpha-D-ribose 1-phosphate + hypoxanthine. The catalysed reaction is thymidine + phosphate = 2-deoxy-alpha-D-ribose 1-phosphate + thymine. The enzyme catalyses uridine + phosphate = alpha-D-ribose 1-phosphate + uracil. It catalyses the reaction xanthosine + phosphate = alpha-D-ribose 1-phosphate + xanthine. Catalyzes the phosphorolysis of diverse nucleosides, yielding D-ribose 1-phosphate and the respective free bases. Can use uridine, adenosine, guanosine, cytidine, thymidine, inosine and xanthosine as substrates. Also catalyzes the reverse reactions. This is Pyrimidine/purine nucleoside phosphorylase from Pseudomonas entomophila (strain L48).